The chain runs to 452 residues: Trigger factor (452 aa).

In terms of domain architecture, PPIase FKBP-type spans 169–254 (GDQLLIDFVG…VQEVRAPVDG (86 aa)).

This sequence belongs to the FKBP-type PPIase family. Tig subfamily.

The protein localises to the cytoplasm. It carries out the reaction [protein]-peptidylproline (omega=180) = [protein]-peptidylproline (omega=0). In terms of biological role, involved in protein export. Acts as a chaperone by maintaining the newly synthesized protein in an open conformation. Functions as a peptidyl-prolyl cis-trans isomerase. The sequence is that of Trigger factor (tig) from Caulobacter vibrioides (strain ATCC 19089 / CIP 103742 / CB 15) (Caulobacter crescentus).